The primary structure comprises 275 residues: Putative protein A464R (275 aa).

The 125-residue stretch at 51 to 175 (KEDVEYLIGM…LMGAIYFDLG (125 aa)) folds into the RNase III domain. In terms of domain architecture, DRBM spans 201 to 269 (NYKDRLLKHT…SKIALHTMGV (69 aa)).

This sequence belongs to the ribonuclease III family.

In Chlorella (PBCV-1), this protein is Putative protein A464R.